Here is a 93-residue protein sequence, read N- to C-terminus: Aspartyl/glutamyl-tRNA(Asn/Gln) amidotransferase subunit C (93 aa).

The protein belongs to the GatC family. Heterotrimer of A, B and C subunits.

It carries out the reaction L-glutamyl-tRNA(Gln) + L-glutamine + ATP + H2O = L-glutaminyl-tRNA(Gln) + L-glutamate + ADP + phosphate + H(+). The catalysed reaction is L-aspartyl-tRNA(Asn) + L-glutamine + ATP + H2O = L-asparaginyl-tRNA(Asn) + L-glutamate + ADP + phosphate + 2 H(+). Allows the formation of correctly charged Asn-tRNA(Asn) or Gln-tRNA(Gln) through the transamidation of misacylated Asp-tRNA(Asn) or Glu-tRNA(Gln) in organisms which lack either or both of asparaginyl-tRNA or glutaminyl-tRNA synthetases. The reaction takes place in the presence of glutamine and ATP through an activated phospho-Asp-tRNA(Asn) or phospho-Glu-tRNA(Gln). This Rubrobacter xylanophilus (strain DSM 9941 / JCM 11954 / NBRC 16129 / PRD-1) protein is Aspartyl/glutamyl-tRNA(Asn/Gln) amidotransferase subunit C.